The following is a 248-amino-acid chain: Methionine aminopeptidase 1 (248 aa).

Substrate is bound at residue His-77. The a divalent metal cation site is built by Asp-94, Asp-105, and His-168. His-175 provides a ligand contact to substrate. A divalent metal cation is bound by residues Glu-201 and Glu-232.

In terms of assembly, monomer. Co(2+) serves as cofactor. The cofactor is Zn(2+). Mn(2+) is required as a cofactor. Requires Fe(2+) as cofactor.

The protein resides in the cytoplasm. It carries out the reaction Release of N-terminal amino acids, preferentially methionine, from peptides and arylamides.. Removes the N-terminal methionine from nascent proteins. The N-terminal methionine is often cleaved when the second residue in the primary sequence is small and uncharged (Met-Ala-, Cys, Gly, Pro, Ser, Thr, or Val). Requires deformylation of the N(alpha)-formylated initiator methionine before it can be hydrolyzed. The sequence is that of Methionine aminopeptidase 1 from Bacillus subtilis (strain 168).